The chain runs to 398 residues: Ribosomal RNA large subunit methyltransferase F (398 aa).

Over residues 1–12 the composition is skewed to basic residues; the sequence is MTPSRKPARPGA. The interval 1–85 is disordered; sequence MTPSRKPARP…RNLHGQGYDF (85 aa). Low complexity-rich tracts occupy residues 20–40 and 48–59; these read PSAK…AQPK and QAKSQAKPQAKS.

It belongs to the methyltransferase superfamily. METTL16/RlmF family.

It localises to the cytoplasm. It catalyses the reaction adenosine(1618) in 23S rRNA + S-adenosyl-L-methionine = N(6)-methyladenosine(1618) in 23S rRNA + S-adenosyl-L-homocysteine + H(+). In terms of biological role, specifically methylates the adenine in position 1618 of 23S rRNA. The protein is Ribosomal RNA large subunit methyltransferase F of Shewanella loihica (strain ATCC BAA-1088 / PV-4).